A 731-amino-acid chain; its full sequence is Probable G-protein coupled receptor 149 (731 aa).

At 1–35 (MSLFLSNLSTNDSSLWKENHNSTDLLNPPGTLNIY) the chain is on the extracellular side. N-linked (GlcNAc...) asparagine glycosylation is found at Asn-7, Asn-11, and Asn-21. Residues 36–56 (LFCLTCLMTFAALVGSIYSLI) form a helical membrane-spanning segment. Residues 57–69 (SLLKMQNRTVVSM) are Cytoplasmic-facing. A helical membrane pass occupies residues 70 to 90 (LVASWSVDDLMSVLSVTIFMF). Over 91-109 (LQWPNEVPGYFQFLCTTSA) the chain is Extracellular. A disulfide bridge connects residues Cys-105 and Cys-182. The chain crosses the membrane as a helical span at residues 110-132 (LMYLCQGLSSNLKATLLVSYNFY). Residues 133–155 (TMHRGVGSQTASRRSGQVLGVVL) lie on the Cytoplasmic side of the membrane. Residues 156–176 (TVWAASLLLSALPLCGWGAFV) traverse the membrane as a helical segment. Topologically, residues 177-189 (RTPWGCLVDCSSS) are extracellular. A helical membrane pass occupies residues 190-210 (YVLFLSIVYALAFGLLVGLSV). Residues 211–310 (PLTHRLLCSE…SFTVSVAQKR (100 aa)) are Cytoplasmic-facing. A disordered region spans residues 234–271 (RGASIPGTPPTAGRVVSLSPEDAPGPSLRRSGGCSPSS). A helical membrane pass occupies residues 311 to 331 (FALILALTKVVLWLPMMMHMV). The Extracellular segment spans residues 332–342 (VQNVVGFQSLP). A helical membrane pass occupies residues 343-363 (LETFSFLLTLLATTVTPVFVL). Residues 364–731 (SKRWTHLPCG…RKREEESKGS (368 aa)) are Cytoplasmic-facing. Residues 475–526 (NTDITEAKQDSNNKKDAFSDKTGGDINYEETTFSEGPERRLSHEESQKPDLS) are disordered. Composition is skewed to basic and acidic residues over residues 479–497 (TEAK…DKTG) and 510–526 (GPER…PDLS).

This sequence belongs to the G-protein coupled receptor 1 family.

It localises to the cell membrane. Orphan receptor. The protein is Probable G-protein coupled receptor 149 (GPR149) of Homo sapiens (Human).